Consider the following 442-residue polypeptide: 5-methylthioadenosine/S-adenosylhomocysteine deaminase (442 aa).

Zn(2+) contacts are provided by H72 and H74. 2 residues coordinate substrate: E101 and H194. H221 is a binding site for Zn(2+). 2 residues coordinate substrate: E224 and D309. D309 is a binding site for Zn(2+).

Belongs to the metallo-dependent hydrolases superfamily. MTA/SAH deaminase family. Zn(2+) is required as a cofactor.

It catalyses the reaction S-adenosyl-L-homocysteine + H2O + H(+) = S-inosyl-L-homocysteine + NH4(+). The catalysed reaction is S-methyl-5'-thioadenosine + H2O + H(+) = S-methyl-5'-thioinosine + NH4(+). Catalyzes the deamination of 5-methylthioadenosine and S-adenosyl-L-homocysteine into 5-methylthioinosine and S-inosyl-L-homocysteine, respectively. Is also able to deaminate adenosine. This Teredinibacter turnerae (strain ATCC 39867 / T7901) protein is 5-methylthioadenosine/S-adenosylhomocysteine deaminase.